A 181-amino-acid chain; its full sequence is Small ribosomal subunit protein uS4 (181 aa).

Residues 104–166 (RRLQTIVYKK…VTSSFKSRPP (63 aa)) enclose the S4 RNA-binding domain.

The protein belongs to the universal ribosomal protein uS4 family. As to quaternary structure, part of the 30S ribosomal subunit. Contacts protein S5. The interaction surface between S4 and S5 is involved in control of translational fidelity.

One of the primary rRNA binding proteins, it binds directly to 16S rRNA where it nucleates assembly of the body of the 30S subunit. Its function is as follows. With S5 and S12 plays an important role in translational accuracy. The sequence is that of Small ribosomal subunit protein uS4 from Saccharolobus islandicus (strain Y.N.15.51 / Yellowstone #2) (Sulfolobus islandicus).